Reading from the N-terminus, the 121-residue chain is Small ribosomal subunit protein uS12c (121 aa).

It belongs to the universal ribosomal protein uS12 family. In terms of assembly, part of the 30S ribosomal subunit.

It is found in the plastid. The protein resides in the apicoplast. Its function is as follows. With S4 and S5 plays an important role in translational accuracy. Located at the interface of the 30S and 50S subunits. In Toxoplasma gondii, this protein is Small ribosomal subunit protein uS12c (rps12).